A 423-amino-acid polypeptide reads, in one-letter code: Putative competence-damage inducible protein (423 aa).

The protein belongs to the CinA family.

This Streptococcus uberis (strain ATCC BAA-854 / 0140J) protein is Putative competence-damage inducible protein.